Reading from the N-terminus, the 580-residue chain is Acyl-coenzyme A synthetase ACSM4, mitochondrial (580 aa).

Residues 1 to 22 (MKVLLHCQRLRFIWLAKPAGRH) constitute a mitochondrion transit peptide. ATP is bound by residues 229–237 (TSGTTGSPK), 368–373 (EGYGQT), D455, R470, and K566.

This sequence belongs to the ATP-dependent AMP-binding enzyme family. Requires Mg(2+) as cofactor. Mn(2+) is required as a cofactor.

It localises to the mitochondrion. The catalysed reaction is a medium-chain fatty acid + ATP + CoA = a medium-chain fatty acyl-CoA + AMP + diphosphate. The enzyme catalyses hexanoate + ATP + CoA = hexanoyl-CoA + AMP + diphosphate. It catalyses the reaction octanoate + ATP + CoA = octanoyl-CoA + AMP + diphosphate. It carries out the reaction decanoate + ATP + CoA = decanoyl-CoA + AMP + diphosphate. The catalysed reaction is dodecanoate + ATP + CoA = dodecanoyl-CoA + AMP + diphosphate. Its function is as follows. Catalyzes the activation of fatty acids by CoA to produce an acyl-CoA, the first step in fatty acid metabolism. Capable of activating medium-chain fatty acids with a preference for C6-12 fatty acids. This chain is Acyl-coenzyme A synthetase ACSM4, mitochondrial (Acsm4), found in Mus musculus (Mouse).